Here is a 107-residue protein sequence, read N- to C-terminus: uncharacterized protein (107 aa).

The N-terminal stretch at 1 to 34 is a signal peptide; it reads MRLQWPKFITFLSTGSCCLLFLLLPCSFFPLPTA.

This is an uncharacterized protein from Saccharomyces cerevisiae (strain ATCC 204508 / S288c) (Baker's yeast).